We begin with the raw amino-acid sequence, 249 residues long: Ditrans,polycis-undecaprenyl-diphosphate synthase ((2E,6E)-farnesyl-diphosphate specific) (249 aa).

D29 is an active-site residue. D29 contributes to the Mg(2+) binding site. Substrate-binding positions include 30–33 (GNGR), W34, R42, H46, and 74–76 (STE). Catalysis depends on N77, which acts as the Proton acceptor. Substrate is bound by residues W78, R80, R197, and 203–205 (RLS). E216 contributes to the Mg(2+) binding site.

Belongs to the UPP synthase family. In terms of assembly, homodimer. Requires Mg(2+) as cofactor.

The catalysed reaction is 8 isopentenyl diphosphate + (2E,6E)-farnesyl diphosphate = di-trans,octa-cis-undecaprenyl diphosphate + 8 diphosphate. Generates ditrans,octacis-undecaprenyl pyrophosphate (UPP) from isopentenyl pyrophosphate (IPP) and farnesyl diphosphate. UPP is the precursor of glycosyl carrier lipid in the biosynthesis of bacterial cell wall polysaccharide components such as peptidoglycan and lipopolysaccharide. This Micrococcus luteus (Micrococcus lysodeikticus) protein is Ditrans,polycis-undecaprenyl-diphosphate synthase ((2E,6E)-farnesyl-diphosphate specific) (uppS).